Reading from the N-terminus, the 495-residue chain is UDP-glycosyltransferase 1 (495 aa).

The active-site Proton acceptor is the His-24. His-24 lines the an anthocyanidin pocket. Asp-129 (charge relay) is an active-site residue. UDP-alpha-D-glucose-binding residues include Gln-358, His-373, Trp-376, Asn-377, Ser-378, and Glu-381. Position 396 (Gly-396) interacts with an anthocyanidin. Residues Asp-397 and Gln-398 each contribute to the UDP-alpha-D-glucose site.

The protein belongs to the UDP-glycosyltransferase family.

The enzyme catalyses oleanolate + UDP-alpha-D-glucose = oleanolate 3-O-beta-D-glucoside + UDP + H(+). Catalyzes the transfer of a glucose (Glc) moiety from UDP-Glc to the C-3 position of the oleanane sapogenins oleanolate and hederagenin. The monoglucosylated hederagenin 3-O-beta-D-glucoside is a feeding deterrent of the yellow-striped flea beetle (Phyllotreta nemorum). The protein is UDP-glycosyltransferase 1 of Barbarea vulgaris (Yellow rocket).